A 364-amino-acid polypeptide reads, in one-letter code: tRNA 2-selenouridine synthase (364 aa).

The region spanning 14 to 137 (LIADTPIIDV…LRQTAIQATI (124 aa)) is the Rhodanese domain. Cysteine 97 acts as the S-selanylcysteine intermediate in catalysis.

It belongs to the SelU family. As to quaternary structure, monomer.

It catalyses the reaction 5-methylaminomethyl-2-thiouridine(34) in tRNA + selenophosphate + (2E)-geranyl diphosphate + H2O + H(+) = 5-methylaminomethyl-2-selenouridine(34) in tRNA + (2E)-thiogeraniol + phosphate + diphosphate. The enzyme catalyses 5-methylaminomethyl-2-thiouridine(34) in tRNA + (2E)-geranyl diphosphate = 5-methylaminomethyl-S-(2E)-geranyl-thiouridine(34) in tRNA + diphosphate. It carries out the reaction 5-methylaminomethyl-S-(2E)-geranyl-thiouridine(34) in tRNA + selenophosphate + H(+) = 5-methylaminomethyl-2-(Se-phospho)selenouridine(34) in tRNA + (2E)-thiogeraniol. The catalysed reaction is 5-methylaminomethyl-2-(Se-phospho)selenouridine(34) in tRNA + H2O = 5-methylaminomethyl-2-selenouridine(34) in tRNA + phosphate. In terms of biological role, involved in the post-transcriptional modification of the uridine at the wobble position (U34) of tRNA(Lys), tRNA(Glu) and tRNA(Gln). Catalyzes the conversion of 2-thiouridine (S2U-RNA) to 2-selenouridine (Se2U-RNA). Acts in a two-step process involving geranylation of 2-thiouridine (S2U) to S-geranyl-2-thiouridine (geS2U) and subsequent selenation of the latter derivative to 2-selenouridine (Se2U) in the tRNA chain. In Escherichia fergusonii (strain ATCC 35469 / DSM 13698 / CCUG 18766 / IAM 14443 / JCM 21226 / LMG 7866 / NBRC 102419 / NCTC 12128 / CDC 0568-73), this protein is tRNA 2-selenouridine synthase.